Consider the following 269-residue polypeptide: NAD kinase (269 aa).

Asp-62 serves as the catalytic Proton acceptor. NAD(+) contacts are provided by residues 62–63 (DG), 130–131 (NE), Lys-141, Arg-158, Asp-160, 171–176 (TAYAMS), Ala-195, and Gln-229.

The protein belongs to the NAD kinase family. It depends on a divalent metal cation as a cofactor.

The protein resides in the cytoplasm. It carries out the reaction NAD(+) + ATP = ADP + NADP(+) + H(+). Involved in the regulation of the intracellular balance of NAD and NADP, and is a key enzyme in the biosynthesis of NADP. Catalyzes specifically the phosphorylation on 2'-hydroxyl of the adenosine moiety of NAD to yield NADP. The protein is NAD kinase of Methanospirillum hungatei JF-1 (strain ATCC 27890 / DSM 864 / NBRC 100397 / JF-1).